Consider the following 127-residue polypeptide: Ribosome-binding factor A (127 aa).

Belongs to the RbfA family. In terms of assembly, monomer. Binds 30S ribosomal subunits, but not 50S ribosomal subunits or 70S ribosomes.

It localises to the cytoplasm. In terms of biological role, one of several proteins that assist in the late maturation steps of the functional core of the 30S ribosomal subunit. Associates with free 30S ribosomal subunits (but not with 30S subunits that are part of 70S ribosomes or polysomes). Required for efficient processing of 16S rRNA. May interact with the 5'-terminal helix region of 16S rRNA. This is Ribosome-binding factor A from Nitrosococcus oceani (strain ATCC 19707 / BCRC 17464 / JCM 30415 / NCIMB 11848 / C-107).